The following is a 462-amino-acid chain: Integrator complex subunit 12 (462 aa).

A disordered region spans residues Gly42–Val132. Positions Ile59–Val86 are enriched in polar residues. Residue Lys68 forms a Glycyl lysine isopeptide (Lys-Gly) (interchain with G-Cter in SUMO2) linkage. The segment covering Thr88–Glu124 has biased composition (basic and acidic residues). Ser128 carries the phosphoserine modification. The PHD-type zinc finger occupies Gly159–Gln215. Lys254 participates in a covalent cross-link: Glycyl lysine isopeptide (Lys-Gly) (interchain with G-Cter in SUMO2). Over residues Ser301 to Gln328 the composition is skewed to polar residues. The segment at Ser301–Lys462 is disordered. Low complexity-rich tracts occupy residues Lys347–Val358 and Val382–Ser437. The segment covering Gln449–Lys462 has biased composition (basic residues).

The protein belongs to the Integrator subunit 12 family. In terms of assembly, component of the Integrator complex, composed of core subunits INTS1, INTS2, INTS3, INTS4, INTS5, INTS6, INTS7, INTS8, INTS9/RC74, INTS10, INTS11/CPSF3L, INTS12, INTS13, INTS14 and INTS15. The core complex associates with protein phosphatase 2A subunits PPP2CA and PPP2R1A, to form the Integrator-PP2A (INTAC) complex. Post-translationally, dephosphorylated at Ser-128 by the PNUTS-PP1 complex, promoting RNA polymerase II transcription pause-release.

The protein localises to the nucleus. In terms of biological role, component of the integrator complex, a multiprotein complex that terminates RNA polymerase II (Pol II) transcription in the promoter-proximal region of genes. The integrator complex provides a quality checkpoint during transcription elongation by driving premature transcription termination of transcripts that are unfavorably configured for transcriptional elongation: the complex terminates transcription by (1) catalyzing dephosphorylation of the C-terminal domain (CTD) of Pol II subunit POLR2A/RPB1 and SUPT5H/SPT5, (2) degrading the exiting nascent RNA transcript via endonuclease activity and (3) promoting the release of Pol II from bound DNA. The integrator complex is also involved in terminating the synthesis of non-coding Pol II transcripts, such as enhancer RNAs (eRNAs), small nuclear RNAs (snRNAs), telomerase RNAs and long non-coding RNAs (lncRNAs). Mediates recruitment of cytoplasmic dynein to the nuclear envelope, probably as component of the integrator complex. The chain is Integrator complex subunit 12 from Homo sapiens (Human).